Consider the following 186-residue polypeptide: Elongation factor P (186 aa).

Belongs to the elongation factor P family.

It is found in the cytoplasm. The protein operates within protein biosynthesis; polypeptide chain elongation. Involved in peptide bond synthesis. Stimulates efficient translation and peptide-bond synthesis on native or reconstituted 70S ribosomes in vitro. Probably functions indirectly by altering the affinity of the ribosome for aminoacyl-tRNA, thus increasing their reactivity as acceptors for peptidyl transferase. The polypeptide is Elongation factor P (Cupriavidus metallidurans (strain ATCC 43123 / DSM 2839 / NBRC 102507 / CH34) (Ralstonia metallidurans)).